Reading from the N-terminus, the 325-residue chain is Elongation factor P--(R)-beta-lysine ligase (325 aa).

A substrate-binding site is contributed by 76-78; that stretch reads SPE. ATP contacts are provided by residues 100–102 and asparagine 109; that span reads RNE. Tyrosine 118 provides a ligand contact to substrate. ATP is bound at residue 244–245; that stretch reads EL. Glutamate 251 serves as a coordination point for substrate. Glycine 300 serves as a coordination point for ATP.

This sequence belongs to the class-II aminoacyl-tRNA synthetase family. EpmA subfamily. In terms of assembly, homodimer.

The catalysed reaction is D-beta-lysine + L-lysyl-[protein] + ATP = N(6)-((3R)-3,6-diaminohexanoyl)-L-lysyl-[protein] + AMP + diphosphate + H(+). In terms of biological role, with EpmB is involved in the beta-lysylation step of the post-translational modification of translation elongation factor P (EF-P). Catalyzes the ATP-dependent activation of (R)-beta-lysine produced by EpmB, forming a lysyl-adenylate, from which the beta-lysyl moiety is then transferred to the epsilon-amino group of a conserved specific lysine residue in EF-P. The chain is Elongation factor P--(R)-beta-lysine ligase from Enterobacter sp. (strain 638).